The chain runs to 85 residues: Elongation factor 1-beta (85 aa).

It belongs to the EF-1-beta/EF-1-delta family.

Its function is as follows. Promotes the exchange of GDP for GTP in EF-1-alpha/GDP, thus allowing the regeneration of EF-1-alpha/GTP that could then be used to form the ternary complex EF-1-alpha/GTP/AAtRNA. The polypeptide is Elongation factor 1-beta (Methanosphaerula palustris (strain ATCC BAA-1556 / DSM 19958 / E1-9c)).